The primary structure comprises 389 residues: Phospho-N-acetylmuramoyl-pentapeptide-transferase (389 aa).

Transmembrane regions (helical) follow at residues Arg25–Ile45, Thr73–Leu93, Phe97–Tyr117, Phe134–Glu154, Val190–Ser210, Gly222–Met242, Gly258–Trp278, Val286–Ile306, Ile311–Val331, and Gln366–Leu386.

The protein belongs to the glycosyltransferase 4 family. MraY subfamily. Mg(2+) serves as cofactor.

The protein localises to the cell inner membrane. It carries out the reaction UDP-N-acetyl-alpha-D-muramoyl-L-alanyl-gamma-D-glutamyl-meso-2,6-diaminopimeloyl-D-alanyl-D-alanine + di-trans,octa-cis-undecaprenyl phosphate = di-trans,octa-cis-undecaprenyl diphospho-N-acetyl-alpha-D-muramoyl-L-alanyl-D-glutamyl-meso-2,6-diaminopimeloyl-D-alanyl-D-alanine + UMP. The protein operates within cell wall biogenesis; peptidoglycan biosynthesis. Catalyzes the initial step of the lipid cycle reactions in the biosynthesis of the cell wall peptidoglycan: transfers peptidoglycan precursor phospho-MurNAc-pentapeptide from UDP-MurNAc-pentapeptide onto the lipid carrier undecaprenyl phosphate, yielding undecaprenyl-pyrophosphoryl-MurNAc-pentapeptide, known as lipid I. The chain is Phospho-N-acetylmuramoyl-pentapeptide-transferase from Polynucleobacter necessarius subsp. necessarius (strain STIR1).